Here is an 89-residue protein sequence, read N- to C-terminus: Small ribosomal subunit protein uS15 (89 aa).

Belongs to the universal ribosomal protein uS15 family. As to quaternary structure, part of the 30S ribosomal subunit. Forms a bridge to the 50S subunit in the 70S ribosome, contacting the 23S rRNA.

Functionally, one of the primary rRNA binding proteins, it binds directly to 16S rRNA where it helps nucleate assembly of the platform of the 30S subunit by binding and bridging several RNA helices of the 16S rRNA. Its function is as follows. Forms an intersubunit bridge (bridge B4) with the 23S rRNA of the 50S subunit in the ribosome. The sequence is that of Small ribosomal subunit protein uS15 from Shewanella putrefaciens (strain CN-32 / ATCC BAA-453).